A 186-amino-acid chain; its full sequence is MMELQDHFLIAMPQMEDDYFAHSVVYICEHNDQGTMGLVLNQPTDLSIAELCAKMNFMMKTDRTYGNDLVLAGGPVNIERGFILHTKTAQTFKHSYKVTDQLSLTTSADIIDTFGTAQAPEKYLVALGCASWTVNQLESEIANNDWLVVPANNRILFDVPYEDRWLEANLLLGIQHHNFAHQAGHC.

The protein belongs to the UPF0301 (AlgH) family.

The chain is UPF0301 protein PM1869 from Pasteurella multocida (strain Pm70).